Here is a 317-residue protein sequence, read N- to C-terminus: Ribosomal protein L11 methyltransferase (317 aa).

Residues Thr-158, Gly-179, Asp-201, and Asn-244 each contribute to the S-adenosyl-L-methionine site.

This sequence belongs to the methyltransferase superfamily. PrmA family.

Its subcellular location is the cytoplasm. It catalyses the reaction L-lysyl-[protein] + 3 S-adenosyl-L-methionine = N(6),N(6),N(6)-trimethyl-L-lysyl-[protein] + 3 S-adenosyl-L-homocysteine + 3 H(+). Methylates ribosomal protein L11. This Streptococcus pyogenes serotype M18 (strain MGAS8232) protein is Ribosomal protein L11 methyltransferase.